A 249-amino-acid chain; its full sequence is Probable transcriptional regulatory protein aq_1575 (249 aa).

Belongs to the TACO1 family.

The protein resides in the cytoplasm. The sequence is that of Probable transcriptional regulatory protein aq_1575 from Aquifex aeolicus (strain VF5).